Here is a 351-residue protein sequence, read N- to C-terminus: Keratocan (351 aa).

Residues 1-20 form the signal peptide; it reads MATPNCLILWVLLIADTVWT. Residues 34–72 enclose the LRRNT domain; it reads DWDVHDDFYCPRECFCPPSFPTALYCENRGLTEIPPIPS. Intrachain disulfides connect Cys-43–Cys-49 and Cys-47–Cys-59. LRR repeat units lie at residues 73–94, 97–118, 123–143, 144–165, 168–181, 194–214, 215–236, 239–259, 264–283, and 284–305; these read RIWY…PFEN, QLRW…KGAL, KLLF…PLPR, SLEQ…TFSN, NLTL…KLLD, NLMQ…RLPA, NTMQ…YFNV, KVAF…PSRG, SILD…RINA, and NLQH…VICP. Residue Asn-94 is glycosylated (N-linked (GlcNAc...) (keratan sulfate) asparagine). Asn-168 carries N-linked (GlcNAc...) (keratan sulfate) asparagine glycosylation. N-linked (GlcNAc...) asparagine glycosylation occurs at Asn-223. N-linked (GlcNAc...) asparagine glycosylation occurs at Asn-299. Cysteines 304 and 342 form a disulfide.

This sequence belongs to the small leucine-rich proteoglycan (SLRP) family. SLRP class II subfamily. Post-translationally, binds keratan sulfate chains. Selectively expressed in cornea of adult where it is detected in keratocytes but not in scleral cells. In embryo, first detected in periocular mesenchymal cells migrating toward developing cornea on 13.5 dpc; expression gradually restricted to corneal stromal cells on 14.5 to 18.5 dpc. Detected in scleral cells of 15.5 dpc but not in 18.5 dpc embryos.

The protein localises to the secreted. It localises to the extracellular space. It is found in the extracellular matrix. May be important in developing and maintaining corneal transparency and for the structure of the stromal matrix. This Mus musculus (Mouse) protein is Keratocan (Kera).